The chain runs to 179 residues: Ubiquitin-conjugating enzyme E2 C (179 aa).

Positions 1–31 (MASQNRDPAATSVAAARKGAEPSGGAARGPV) are disordered. Ala2 bears the N-acetylalanine mark. Phosphoserine is present on Ser3. A UBC core domain is found at 30-175 (PVGKRLQQEL…LQETYSKQVT (146 aa)). Cys114 acts as the Glycyl thioester intermediate in catalysis.

This sequence belongs to the ubiquitin-conjugating enzyme family. Component of the APC/C complex, composed of at least 14 distinct subunits that assemble into a complex of at least 19 chains with a combined molecular mass of around 1.2 MDa. Within this complex, directly interacts with ANAPC2. Post-translationally, autoubiquitinated by the APC/C complex, leading to its degradation by the proteasome. Its degradation plays a central role in APC/C regulation, allowing cyclin-A accumulation before S phase entry. APC/C substrates inhibit the autoubiquitination of UBE2C/UBCH10 but not its E2 function, hence APC/C remaining active until its substrates have been destroyed.

It carries out the reaction S-ubiquitinyl-[E1 ubiquitin-activating enzyme]-L-cysteine + [E2 ubiquitin-conjugating enzyme]-L-cysteine = [E1 ubiquitin-activating enzyme]-L-cysteine + S-ubiquitinyl-[E2 ubiquitin-conjugating enzyme]-L-cysteine.. It catalyses the reaction S-ubiquitinyl-[E1 ubiquitin-activating enzyme]-L-cysteine + [acceptor protein]-L-lysine = [E1 ubiquitin-activating enzyme]-L-cysteine + N(6)-monoubiquitinyl-[acceptor protein]-L-lysine.. It functions in the pathway protein modification; protein ubiquitination. In terms of biological role, accepts ubiquitin from the E1 complex and catalyzes its covalent attachment to other proteins. In vitro catalyzes 'Lys-11'- and 'Lys-48'-linked polyubiquitination. Acts as an essential factor of the anaphase promoting complex/cyclosome (APC/C), a cell cycle-regulated ubiquitin ligase that controls progression through mitosis. Acts by initiating 'Lys-11'-linked polyubiquitin chains on APC/C substrates, leading to the degradation of APC/C substrates by the proteasome and promoting mitotic exit. The protein is Ubiquitin-conjugating enzyme E2 C (UBE2C) of Homo sapiens (Human).